The chain runs to 633 residues: Carbon monoxide dehydrogenase 2 (633 aa).

Positions 44, 53, 56, 61, and 73 each coordinate [4Fe-4S] cluster. [Ni-4Fe-5S] cluster contacts are provided by His-264, Cys-343, Cys-453, Cys-484, and Cys-525.

This sequence belongs to the Ni-containing carbon monoxide dehydrogenase family. As to quaternary structure, homodimer. The cofactor is [4Fe-4S] cluster. It depends on [Ni-4Fe-5S] cluster as a cofactor.

It catalyses the reaction CO + 2 oxidized [2Fe-2S]-[ferredoxin] + H2O = 2 reduced [2Fe-2S]-[ferredoxin] + CO2 + 2 H(+). In terms of biological role, CODH oxidizes carbon monoxide coupled, via CooF, to the reduction of a hydrogen cation by a hydrogenase (possibly CooH). This chain is Carbon monoxide dehydrogenase 2 (cooS2), found in Methanosarcina acetivorans (strain ATCC 35395 / DSM 2834 / JCM 12185 / C2A).